We begin with the raw amino-acid sequence, 434 residues long: Adenylosuccinate synthetase (434 aa).

GTP is bound by residues 15–21 (GDEGKGK) and 43–45 (GHT). D16 serves as the catalytic Proton acceptor. The Mg(2+) site is built by D16 and G43. Residues 16-19 (DEGK), 41-44 (NAGH), T133, R147, Q228, T243, and R307 contribute to the IMP site. H44 functions as the Proton donor in the catalytic mechanism. 303-309 (SVTGRAR) lines the substrate pocket. Residues R309, 335–337 (KLD), and 418–420 (STG) each bind GTP.

This sequence belongs to the adenylosuccinate synthetase family. In terms of assembly, homodimer. Requires Mg(2+) as cofactor.

It localises to the cytoplasm. It catalyses the reaction IMP + L-aspartate + GTP = N(6)-(1,2-dicarboxyethyl)-AMP + GDP + phosphate + 2 H(+). It participates in purine metabolism; AMP biosynthesis via de novo pathway; AMP from IMP: step 1/2. Plays an important role in the de novo pathway of purine nucleotide biosynthesis. Catalyzes the first committed step in the biosynthesis of AMP from IMP. The chain is Adenylosuccinate synthetase from Neisseria gonorrhoeae (strain NCCP11945).